A 270-amino-acid chain; its full sequence is Transmembrane protein 176B (270 aa).

Helical transmembrane passes span 65–85, 95–115, 127–147, and 209–229; these read LALGVTQILLGVVSCVLGVCL, ASGCAFWAGSVVIAAGAGAIV, ISSLLTLAGFATAMAAVVLCV, and LFLAVCVLKVIVSLVSLGVGL. A phosphoserine mark is found at Ser-236, Ser-245, Ser-254, and Ser-258. Residues 237 to 270 are disordered; the sequence is SQPLNEEGSEKRLLGENSVPPSPSREQTSTAIVL. Over residues 260–270 the composition is skewed to polar residues; the sequence is SREQTSTAIVL.

It belongs to the TMEM176 family. Expressed in lung and dermal fibroblasts.

Its subcellular location is the nucleus membrane. In terms of biological role, may play a role in the process of maturation of dendritic cells. Required for the development of cerebellar granule cells. In Homo sapiens (Human), this protein is Transmembrane protein 176B (TMEM176B).